The sequence spans 367 residues: Protein-glutamate methylesterase/protein-glutamine glutaminase (367 aa).

A Response regulatory domain is found at 6–123 (RVLVVDDSAF…SLGIKQLADE (118 aa)). 4-aspartylphosphate is present on aspartate 57. Residues 165–361 (ISKKEIVVVI…DILLKKVNEY (197 aa)) enclose the CheB-type methylesterase domain. Active-site residues include serine 177, histidine 204, and aspartate 303.

The protein belongs to the CheB family. Post-translationally, phosphorylated by CheA. Phosphorylation of the N-terminal regulatory domain activates the methylesterase activity.

The protein resides in the cytoplasm. The catalysed reaction is [protein]-L-glutamate 5-O-methyl ester + H2O = L-glutamyl-[protein] + methanol + H(+). It carries out the reaction L-glutaminyl-[protein] + H2O = L-glutamyl-[protein] + NH4(+). In terms of biological role, involved in chemotaxis. Part of a chemotaxis signal transduction system that modulates chemotaxis in response to various stimuli. Catalyzes the demethylation of specific methylglutamate residues introduced into the chemoreceptors (methyl-accepting chemotaxis proteins or MCP) by CheR. Also mediates the irreversible deamidation of specific glutamine residues to glutamic acid. The polypeptide is Protein-glutamate methylesterase/protein-glutamine glutaminase (Caldanaerobacter subterraneus subsp. tengcongensis (strain DSM 15242 / JCM 11007 / NBRC 100824 / MB4) (Thermoanaerobacter tengcongensis)).